Reading from the N-terminus, the 181-residue chain is Translation initiation factor IF-3 (181 aa).

The protein belongs to the IF-3 family. As to quaternary structure, monomer.

Its subcellular location is the cytoplasm. Functionally, IF-3 binds to the 30S ribosomal subunit and shifts the equilibrium between 70S ribosomes and their 50S and 30S subunits in favor of the free subunits, thus enhancing the availability of 30S subunits on which protein synthesis initiation begins. This chain is Translation initiation factor IF-3, found in Idiomarina loihiensis (strain ATCC BAA-735 / DSM 15497 / L2-TR).